A 501-amino-acid polypeptide reads, in one-letter code: Ribose import ATP-binding protein RbsA (501 aa).

ABC transporter domains are found at residues 5 to 241 (LQLK…VGRK) and 252 to 495 (APGD…VGKL). An ATP-binding site is contributed by 37 to 44 (GENGAGKS).

It belongs to the ABC transporter superfamily. Ribose importer (TC 3.A.1.2.1) family. As to quaternary structure, the complex is composed of an ATP-binding protein (RbsA), two transmembrane proteins (RbsC) and a solute-binding protein (RbsB).

The protein resides in the cell inner membrane. It catalyses the reaction D-ribose(out) + ATP + H2O = D-ribose(in) + ADP + phosphate + H(+). Functionally, part of the ABC transporter complex RbsABC involved in ribose import. Responsible for energy coupling to the transport system. The sequence is that of Ribose import ATP-binding protein RbsA from Escherichia coli (strain UTI89 / UPEC).